Consider the following 388-residue polypeptide: Alpha-2B adrenergic receptor (388 aa).

A helical transmembrane segment spans residues 1 to 25; it reads AIAAVITFLILFTIFGNALVILAVL. Over 26–36 the chain is Cytoplasmic; sequence TSRSLRAPQNL. A helical transmembrane segment spans residues 37-62; sequence FLVSLAAADILVATLIIPFSLANELL. Residues 63–72 lie on the Extracellular side of the membrane; the sequence is GYWYFRRTWC. The cysteines at positions 72 and 151 are disulfide-linked. A helical transmembrane segment spans residues 73 to 95; the sequence is EVYLALDVLFCTSSIVHLCAISL. Residues 96-117 are Cytoplasmic-facing; sequence DRYWAVSRALEYNSKRTPRXIK. The chain crosses the membrane as a helical span at residues 118-140; that stretch reads CIILTVWLIAAAISLPPLIYKGD. Residues 141-156 lie on the Extracellular side of the membrane; that stretch reads QGPQPRGRPQCKLNQE. The helical transmembrane segment at 157–180 threads the bilayer; the sequence is AWYILSSSIGSFFAPCLIMILVYL. Over 181–352 the chain is Cytoplasmic; it reads RIYVIAKRSN…LTREKRFTFV (172 aa). The segment at 193 to 309 is disordered; sequence GPRAKGASRE…ASACNPPLQQ (117 aa). Residues 239–249 are compositionally biased toward basic and acidic residues; sequence PTGEKEGKTPE. The span at 279–291 shows a compositional bias: acidic residues; it reads PEEEAEEEEEECE. Low complexity predominate over residues 292–302; the sequence is PQAAPASSASA. A helical transmembrane segment spans residues 353–376; it reads LAVVIGVFVLCWFPFFFSYSLGAI. Residues 377-385 lie on the Extracellular side of the membrane; the sequence is CPQRCKVPH. The chain crosses the membrane as a helical span at residues 386 to 388; it reads GLF.

The protein belongs to the G-protein coupled receptor 1 family. Adrenergic receptor subfamily. ADRA2B sub-subfamily. As to quaternary structure, interacts with RAB26. Interacts with PPP1R9B.

The protein localises to the cell membrane. Its function is as follows. Alpha-2 adrenergic receptors mediate the catecholamine-induced inhibition of adenylate cyclase through the action of G proteins. This chain is Alpha-2B adrenergic receptor (ADRA2B), found in Orycteropus afer (Aardvark).